A 448-amino-acid polypeptide reads, in one-letter code: Putative RNA-ligase (448 aa).

Belongs to the asfivirus M448R family.

It is found in the virion. The protein is Putative RNA-ligase of Ornithodoros (relapsing fever ticks).